The sequence spans 239 residues: Pentatricopeptide repeat-containing protein DWY1, chloroplastic (239 aa).

The transit peptide at 1-35 (MALEAAFSMSFCSFSVPKAIFCERETSSFQRITSR) directs the protein to the chloroplast. 2 disordered regions span residues 40–59 (AGES…KETS) and 101–122 (HISP…SGGE). Residues 111-122 (VRGDKPEISGGE) show a composition bias toward basic and acidic residues. Residues 113–144 (GDKPEISGGEKKAIVDRSKAYVKLKSLGKEVR) form a type E(+) motif region. A type DYW motif region spans residues 145–239 (DAGYVPETKY…DGNCSCGDYW (95 aa)).

This sequence belongs to the PPR family. PCMP-H subfamily. In terms of assembly, interacts with CRR4. The cofactor is Zn(2+).

It localises to the plastid. It is found in the chloroplast. In terms of biological role, plays a major role in single RNA editing events in chloroplasts. Acts as a site-recognition transacting factor involved in the edition of the site 1 of ndhD (ndhD-1 site corresponding to cytidine-2), which is a plastid-encoded subunit of the NADH-plastoquinone oxidoreductase. The interaction with CRR4 is required for its function in editing the ndhD-1 site. The polypeptide is Pentatricopeptide repeat-containing protein DWY1, chloroplastic (Arabidopsis thaliana (Mouse-ear cress)).